The primary structure comprises 651 residues: Acetyl-coenzyme A synthetase (651 aa).

CoA-binding positions include 189-192 (RGGK), T311, and N335. Residues 387-389 (GEP), 411-416 (DTWWQT), D500, and R515 each bind ATP. A CoA-binding site is contributed by S523. R526 lines the ATP pocket. Mg(2+) is bound by residues V537, H539, and V542. R586 lines the CoA pocket. K611 bears the N6-acetyllysine mark.

Belongs to the ATP-dependent AMP-binding enzyme family. Mg(2+) serves as cofactor. Post-translationally, acetylated. Deacetylation by the SIR2-homolog deacetylase activates the enzyme.

The catalysed reaction is acetate + ATP + CoA = acetyl-CoA + AMP + diphosphate. Its function is as follows. Catalyzes the conversion of acetate into acetyl-CoA (AcCoA), an essential intermediate at the junction of anabolic and catabolic pathways. AcsA undergoes a two-step reaction. In the first half reaction, AcsA combines acetate with ATP to form acetyl-adenylate (AcAMP) intermediate. In the second half reaction, it can then transfer the acetyl group from AcAMP to the sulfhydryl group of CoA, forming the product AcCoA. The sequence is that of Acetyl-coenzyme A synthetase from Brucella melitensis biotype 2 (strain ATCC 23457).